Consider the following 507-residue polypeptide: GMP synthase [glutamine-hydrolyzing] 1 (507 aa).

One can recognise a Glutamine amidotransferase type-1 domain in the interval 4–193 (KIIILDFGSQ…VVDVCGCKQD (190 aa)). The Nucleophile role is filled by Cys79. Catalysis depends on residues His167 and Glu169. Residues 194–382 (WSPASFIEST…LGMPEHLITR (189 aa)) form the GMPS ATP-PPase domain. An ATP-binding site is contributed by 221-227 (SGGVDSS).

Homodimer.

It carries out the reaction XMP + L-glutamine + ATP + H2O = GMP + L-glutamate + AMP + diphosphate + 2 H(+). The protein operates within purine metabolism; GMP biosynthesis; GMP from XMP (L-Gln route): step 1/1. In terms of biological role, catalyzes the synthesis of GMP from XMP. The chain is GMP synthase [glutamine-hydrolyzing] 1 (guaA1) from Bacteroides thetaiotaomicron (strain ATCC 29148 / DSM 2079 / JCM 5827 / CCUG 10774 / NCTC 10582 / VPI-5482 / E50).